Here is a 604-residue protein sequence, read N- to C-terminus: Siderophore iron transporter mirB (604 aa).

A disordered region spans residues 1–61; that stretch reads MTIGSKFSLL…DNSSDEALPS (61 aa). Transmembrane regions (helical) follow at residues 73 to 95, 115 to 137, 149 to 168, 178 to 200, 207 to 224, 237 to 259, 289 to 311, 326 to 343, 363 to 385, 400 to 422, 427 to 449, 454 to 476, 489 to 511, and 566 to 588; these read AVTL…LVTL, FQSH…ALYI, AEGW…MMAA, ADVF…AADI, GIAF…AFAG, WRWG…YFVL, YFFA…FLLP, YIIA…LFVL, TVLG…NSYF, AGYV…GFAI, YFRW…MIHF, QYIG…FVLL, YVAA…GNAI, and AQAR…MFMV.

Belongs to the major facilitator superfamily.

The protein localises to the membrane. Involved in the transport of siderophore triacestylfusarinine C and so has a role in iron homeostasis. The chain is Siderophore iron transporter mirB (mirB) from Emericella nidulans (strain FGSC A4 / ATCC 38163 / CBS 112.46 / NRRL 194 / M139) (Aspergillus nidulans).